We begin with the raw amino-acid sequence, 451 residues long: Phosphoglucosamine mutase (451 aa).

Ser-102 serves as the catalytic Phosphoserine intermediate. 4 residues coordinate Mg(2+): Ser-102, Asp-242, Asp-244, and Asp-246. Ser-102 is modified (phosphoserine).

The protein belongs to the phosphohexose mutase family. The cofactor is Mg(2+). In terms of processing, activated by phosphorylation.

The enzyme catalyses alpha-D-glucosamine 1-phosphate = D-glucosamine 6-phosphate. Its function is as follows. Catalyzes the conversion of glucosamine-6-phosphate to glucosamine-1-phosphate. This is Phosphoglucosamine mutase from Staphylococcus epidermidis (strain ATCC 35984 / DSM 28319 / BCRC 17069 / CCUG 31568 / BM 3577 / RP62A).